Reading from the N-terminus, the 625-residue chain is MACYIYQLPSWVLDDPCRNMDALSEWDWMEFASYVITDLTQLRKIKSMERVQGVSITRELLWWWGMRQATVRQLVDLLCRLELYRAAQIILNWKPAPEIRCPIPAFPDSVKPEKPLAASVKKAENEQEEGQPVRMATFPGPGSSPARAHQPAFLQPPEEDAPHSLRTDLPTSSDSKDFSTSIPKQEKLLSLAGDSLFWSEADVVQATDDFNQNHKISQGTFADVYRGYRHGTPFVFKKLRETACSSPGSIERFFQAELQICLRCCHPNVLPVLGFCAARQFHSFIYPYMANGSLQDRLQGQGGSDPLPWPQRVSICSGLLCAVEYLHGLEIIHSNVKSSNVLLDQNLTPKLAHPMAHLCPVNKRSKYTMMKTHLFRTSAAYLPEDFIRVGQLTKRVDIFSCGIVLAEVLTGIPAMDNNRSPVYLKDLLLSEIPSSTASPCSRKTGVENVMAKEICQKYLEKGAGRLPEDCAEALATAACLCLRKRNTSLQEVRGSVAAVEEWLRGREMLLPWSGLSEGTGSSSNTPEETDDVDNSSLDASSSVSVAPWAGAATPLLPTENGEGRLRVIVRREADSSSEACVGPEPPQDVTETSWQIDINEAKRKLMENILLYKEEKLDSIELFGP.

Positions 13–94 constitute a Death domain; that stretch reads LDDPCRNMDA…RAAQIILNWK (82 aa). Residues 111–181 are disordered; sequence KPEKPLAASV…SSDSKDFSTS (71 aa). A Phosphoserine modification is found at serine 144. Over residues 169–181 the composition is skewed to polar residues; the sequence is LPTSSDSKDFSTS. The Protein kinase domain occupies 210–503; that stretch reads FNQNHKISQG…GSVAAVEEWL (294 aa). Residues 216 to 224, lysine 237, and 337 to 340 each bind ATP; these read ISQGTFADV and KSSN. The tract at residues 513–539 is disordered; that stretch reads SGLSEGTGSSSNTPEETDDVDNSSLDA. A compositionally biased stretch (polar residues) spans 516–526; sequence SEGTGSSSNTP.

Belongs to the protein kinase superfamily. TKL Ser/Thr protein kinase family. Pelle subfamily. In terms of assembly, interacts with MYD88. IL-1 stimulation leads to the formation of a signaling complex which dissociates from the IL-1 receptor following the binding of PELI1.

Functionally, binds to the IL-1 type I receptor following IL-1 engagement, triggering intracellular signaling cascades leading to transcriptional up-regulation and mRNA stabilization. The sequence is that of Interleukin-1 receptor-associated kinase-like 2 (IRAK2) from Pongo abelii (Sumatran orangutan).